The primary structure comprises 219 residues: 7-carboxy-7-deazaguanine synthase (219 aa).

Substrate-binding positions include Ile-12 to Gly-14 and Arg-27. The Radical SAM core domain occupies Tyr-18–Arg-219. [4Fe-4S] cluster contacts are provided by Cys-31, Cys-35, and Cys-38. A Mg(2+)-binding site is contributed by Thr-40. Thr-92 contacts substrate. Residues Gly-94 and Ser-136 to Lys-138 each bind S-adenosyl-L-methionine.

Belongs to the radical SAM superfamily. 7-carboxy-7-deazaguanine synthase family. In terms of assembly, homodimer. [4Fe-4S] cluster serves as cofactor. S-adenosyl-L-methionine is required as a cofactor. Requires Mg(2+) as cofactor.

The catalysed reaction is 6-carboxy-5,6,7,8-tetrahydropterin + H(+) = 7-carboxy-7-deazaguanine + NH4(+). It participates in purine metabolism; 7-cyano-7-deazaguanine biosynthesis. Functionally, catalyzes the complex heterocyclic radical-mediated conversion of 6-carboxy-5,6,7,8-tetrahydropterin (CPH4) to 7-carboxy-7-deazaguanine (CDG), a step common to the biosynthetic pathways of all 7-deazapurine-containing compounds. The sequence is that of 7-carboxy-7-deazaguanine synthase from Buchnera aphidicola subsp. Schizaphis graminum (strain Sg).